The sequence spans 463 residues: MSEEEAAQIPRSSVWEQDQQNVVQRVVALPLVRATCTAVCDVYSAAKDRHPLLGSACRLAENCVCGLTTRALDHAQPLLEHLQPQLATMNSLACRGLDKLEEKLPFLQQPSETVVTSAKDVVASSVTGVVDLARRGRRWSVELKRSVSHAVDVVLEKSEELVDHFLPMTEEELAALAAEAEGPEVGSVEDQRRQQGYFVRLGSLSARIRHLAYEHSVGKLRQSKHRAQDTLAQLQETLELIDHMQCGVTPTAPACPGKVHELWGEWGQRPPESRRRSQAELETLVLSRSLTQELQGTVEALESSVRGLPAGAQEKVAEVRRSVDALQTAFADARCFRDVPAAALAEGRGRVAHAHACVDELLELVVQAVPLPWLVGPFAPILVERPEPLPDLADLVDEVIGGPDPRWAHLDWPAQQRAWEAEHRDGSGNGDGDRMGVAGDICEQEPETPSCPVKHTLMPELDF.

The interval 1 to 108 (MSEEEAAQIP…KLEEKLPFLQ (108 aa)) is interaction with LIPE. The tract at residues 1-173 (MSEEEAAQIP…HFLPMTEEEL (173 aa)) is essential for lipid droplet targeting. Phosphoserine occurs at positions 2, 148, and 322. An interaction with PNPLA2 and ABHD5 region spans residues 185–463 (VGSVEDQRRQ…KHTLMPELDF (279 aa)). A recruits mitochondria at the lipid droplet surface region spans residues 444 to 463 (QEPETPSCPVKHTLMPELDF).

This sequence belongs to the perilipin family. Homooligomer. Interacts with PNPLA2; prevents interaction of PNPLA2 with ABHD5. Interacts with ABHD5; targets ABHD5 to lipid droplets and promotes interaction of ABHD5 with PNPLA2. Interacts with LIPE. Post-translationally, phosphorylated by PKA. Phosphorylated on serine in skeletal muscle at rest or upon lipolytic stimulation. As to expression, expressed in skeletal muscle, liver, heart and kidney.

The protein resides in the lipid droplet. It localises to the cytoplasm. It is found in the mitochondrion. In terms of biological role, lipid droplet-associated protein that maintains the balance between lipogenesis and lipolysis and also regulates fatty acid oxidation in oxidative tissues. Recruits mitochondria to the surface of lipid droplets and is involved in lipid droplet homeostasis by regulating both the storage of fatty acids in the form of triglycerides and the release of fatty acids for mitochondrial fatty acid oxidation. In lipid droplet triacylglycerol hydrolysis, plays a role as a scaffolding protein for three major key lipolytic players: ABHD5, PNPLA2 and LIPE. Reduces the triacylglycerol hydrolase activity of PNPLA2 by recruiting and sequestering PNPLA2 to lipid droplets. Phosphorylation by PKA enables lipolysis probably by promoting release of ABHD5 from the perilipin scaffold and by facilitating interaction of ABHD5 with PNPLA2. Also increases lipolysis through interaction with LIPE and upon PKA-mediated phosphorylation of LIPE. The protein is Perilipin-5 (PLIN5) of Homo sapiens (Human).